Here is a 689-residue protein sequence, read N- to C-terminus: Glycine--tRNA ligase beta subunit (689 aa).

The protein belongs to the class-II aminoacyl-tRNA synthetase family. Tetramer of two alpha and two beta subunits.

It is found in the cytoplasm. The catalysed reaction is tRNA(Gly) + glycine + ATP = glycyl-tRNA(Gly) + AMP + diphosphate. This Escherichia coli O7:K1 (strain IAI39 / ExPEC) protein is Glycine--tRNA ligase beta subunit.